A 650-amino-acid chain; its full sequence is Transcription factor LHW (650 aa).

2 disordered regions span residues 381-417 and 431-470; these read LTKV…SSVY and LKRE…DRQM. Over residues 384–397 the composition is skewed to low complexity; that stretch reads VSNSSVTTPSHSSP. A Nuclear localization signal motif is present at residues 451–458; sequence NRKRLKPG. The region spanning 455–504 is the bHLH domain; that stretch reads LKPGENPRPRPKDRQMIQDRVKELREIIPNGAKCSIDALLERTIKHMLFL. The span at 456 to 470 shows a compositional bias: basic and acidic residues; sequence KPGENPRPRPKDRQM.

This sequence belongs to the bHLH protein family. LHW subfamily. In terms of assembly, homodimer. Can also interact with bHLH proteins. Expressed in both root and shoot meristems. Present in root tips.

It is found in the nucleus. Functionally, transcription activator that regulates root development; promotes the production of stele cells in roots. Coordinately controls the number of all vascular cell types by regulating the size of the pool of cells from which they arise. This Arabidopsis thaliana (Mouse-ear cress) protein is Transcription factor LHW (LHW).